The chain runs to 120 residues: Large ribosomal subunit protein bL19 (120 aa).

It belongs to the bacterial ribosomal protein bL19 family.

This protein is located at the 30S-50S ribosomal subunit interface and may play a role in the structure and function of the aminoacyl-tRNA binding site. The protein is Large ribosomal subunit protein bL19 of Picosynechococcus sp. (strain ATCC 27264 / PCC 7002 / PR-6) (Agmenellum quadruplicatum).